The chain runs to 148 residues: 3-dehydroquinate dehydratase (148 aa).

Tyr-23 acts as the Proton acceptor in catalysis. Asn-74, His-80, and Asp-87 together coordinate substrate. The active-site Proton donor is the His-100. Residues 101 to 102 (IS) and Arg-111 contribute to the substrate site.

The protein belongs to the type-II 3-dehydroquinase family. Homododecamer.

It carries out the reaction 3-dehydroquinate = 3-dehydroshikimate + H2O. It functions in the pathway metabolic intermediate biosynthesis; chorismate biosynthesis; chorismate from D-erythrose 4-phosphate and phosphoenolpyruvate: step 3/7. In terms of biological role, catalyzes a trans-dehydration via an enolate intermediate. The sequence is that of 3-dehydroquinate dehydratase from Anoxybacillus flavithermus (strain DSM 21510 / WK1).